A 598-amino-acid polypeptide reads, in one-letter code: Pantothenate kinase 1 (598 aa).

Positions 32-161 are disordered; the sequence is ARPGDQGKAG…SPGAPVGTSA (130 aa). The span at 38–49 shows a compositional bias: gly residues; that stretch reads GKAGGGSPGWGC. S215 carries the post-translational modification Phosphoserine. Residues 218–235 carry the Nucleolar localization signal motif; the sequence is KKCRLRRRMDSGRKNRPP. E363 functions as the Proton acceptor in the catalytic mechanism. 3 residues coordinate acetyl-CoA: S417, S420, and R432.

It belongs to the type II pantothenate kinase family. In terms of assembly, homodimer. Expressed at high levels in brain, heart, kidney, liver, skeletal muscle and testis. As to expression, detected at much lower levels in kidney, liver, brain and testis and not detected in heart or skeletal muscle.

The protein localises to the cytoplasm. The protein resides in the nucleus. Its subcellular location is the nucleolus. It localises to the cytosol. It is found in the cytoplasmic vesicle. The protein localises to the clathrin-coated vesicle. The protein resides in the recycling endosome. The enzyme catalyses (R)-pantothenate + ATP = (R)-4'-phosphopantothenate + ADP + H(+). It functions in the pathway cofactor biosynthesis; coenzyme A biosynthesis; CoA from (R)-pantothenate: step 1/5. Regulated by feedback inhibition by CoA and its thioesters. In terms of biological role, catalyzes the phosphorylation of pantothenate to generate 4'-phosphopantothenate in the first and rate-determining step of coenzyme A (CoA) synthesis. This Homo sapiens (Human) protein is Pantothenate kinase 1 (PANK1).